Consider the following 422-residue polypeptide: Lactoyl-CoA dehydratase subunit alpha (422 aa).

This sequence belongs to the FldB/FldC dehydratase alpha/beta subunit family. Heterodimer of an alpha (LcdA) and a beta (LcdB) subunit. It depends on [4Fe-4S] cluster as a cofactor. Requires FMN as cofactor. Riboflavin serves as cofactor. The cofactor is Mg(2+).

It catalyses the reaction (R)-lactoyl-CoA = acryloyl-CoA + H2O. The catalysed reaction is (2R)-hydroxybutanoyl-CoA = (2E)-butenoyl-CoA + H2O. Its activity is regulated as follows. Activated by the LcdC protein. Functionally, involved in the acrylate pathway for the conversion of D-lactic acid to propionic acid. Catalyzes the reversible dehydration of Lactoyl-CoA and 2-hydroxybutyroyl-CoA to acryloyl-CoA and crotonyl-CoA, respectively. This Anaerotignum propionicum (Clostridium propionicum) protein is Lactoyl-CoA dehydratase subunit alpha (lcdA).